Here is a 477-residue protein sequence, read N- to C-terminus: MYMAIMIILFLSSILLSLLLLLRKHLSHFSYPNLPPGNTGLPLIGESFSFLSAGRQGHPEKFITDRVRRFSSSSSCVFKTHLFGSPTAVVTGASGNKFLFTNENKLVVSWWPDSVNKIFPSSMQTSSKEEARKLRMLLSQFMKPEALRRYVGVMDEIAQRHFETEWANQDQVIVFPLTKKFTFSIACRSFLSMEDPARVRQLEEQFNTVAVGIFSIPIDLPGTRFNRAIKASRLLRKEVSAIVRQRKEELKAGKALEEHDILSHMLMNIGETKDEDLADKIIGLLIGGHDTASIVCTFVVNYLAEFPHVYQRVLQEQKEILKEKKEKEGLRWEDIEKMRYSWNVACEVMRIVPPLSGTFREAIDHFSFKGFYIPKGWKLYWSATATHMNPDYFPEPERFEPNRFEGSGPKPYTYVPFGGGPRMCPGKEYARLEILIFMHNLVNRFKWEKVFPNENKIVVDPLPIPDKGLPIRIFPQS.

A helical transmembrane segment spans residues 2–22; it reads YMAIMIILFLSSILLSLLLLL. Residue Cys424 participates in heme binding.

Belongs to the cytochrome P450 family. Requires heme as cofactor.

It localises to the membrane. Functionally, possesses triterpene oxidizing activity. Catalyzes the C28 hydroxylation of alpha-amyrin, beta-amyrin, and lupeol, producing uvaol, erythrodiol, and betulin, respectively. Catalyzes the C28 carboxylation of alpha- and beta-amyrin. The polypeptide is Cytochrome P450 716A1 (Arabidopsis thaliana (Mouse-ear cress)).